The chain runs to 1576 residues: DNA-directed RNA polymerase subunit beta' (1576 aa).

Zn(2+)-binding residues include Cys64, Cys66, Cys79, and Cys82. Mg(2+) contacts are provided by Asp590, Asp592, and Asp594. Residues Cys928, Cys1002, Cys1009, and Cys1012 each coordinate Zn(2+).

This sequence belongs to the RNA polymerase beta' chain family. In terms of assembly, the RNAP catalytic core consists of 2 alpha, 1 beta, 1 beta' and 1 omega subunit. When a sigma factor is associated with the core the holoenzyme is formed, which can initiate transcription. Requires Mg(2+) as cofactor. It depends on Zn(2+) as a cofactor.

The catalysed reaction is RNA(n) + a ribonucleoside 5'-triphosphate = RNA(n+1) + diphosphate. Its function is as follows. DNA-dependent RNA polymerase catalyzes the transcription of DNA into RNA using the four ribonucleoside triphosphates as substrates. The protein is DNA-directed RNA polymerase subunit beta' of Aquifex pyrophilus.